The chain runs to 540 residues: ADP,ATP carrier protein 2 (540 aa).

11 helical membrane-spanning segments follow: residues 24-44 (FSKFVPLFLLAFFVGFNYCLL), 62-82 (VIPFLKVWGIVPGAVIVTMVY), 94-114 (VFYCFMAAFLGFFFLFAVIIY), 151-171 (IYYVMSELWSSVVLSMLFWGL), 223-243 (SVMLNLTMLITCSGLIMIWLY), 295-315 (LLGLAIIVLSYNLVIHLFEVV), 337-357 (ITTLIGVVSVLAAVLLTGQCI), 367-387 (LVTPLVMLVSGLLFFGTIFAA), 391-411 (ISIFGGVLGMTPLALAAWTGG), 458-478 (SGGSLIYQGLLVIFSSVAASL), and 480-500 (VIALVLLIIMVVWIAVVAYIG).

It belongs to the ADP/ATP translocase tlc family.

It is found in the cell membrane. This Chlamydia pneumoniae (Chlamydophila pneumoniae) protein is ADP,ATP carrier protein 2 (tlcB).